The sequence spans 391 residues: Autotransporter heptosyltransferase Aah (391 aa).

Residues Thr101, Leu102, and Gly103 each contribute to the ADP-D-glycero-beta-D-manno-heptose site. Catalysis depends on Asp104, which acts as the Proton acceptor. The ADP-D-glycero-beta-D-manno-heptose site is built by Gln218, Thr220, Lys224, Arg251, Leu275, Gly296, and Glu320. Residues Cys333, Cys336, Cys352, and Cys364 each contribute to the Fe(3+) site.

Belongs to the glycosyltransferase 9 family. In terms of assembly, homododecamer composed of 6 homodimers forming a ring. Fe(3+) serves as cofactor.

Its subcellular location is the cytoplasm. It carries out the reaction ADP-D-glycero-beta-D-manno-heptose + L-seryl-[protein] = O-(D-glycero-alpha-D-manno-heptosyl)-L-seryl-[protein] + ADP + H(+). The catalysed reaction is ADP-L-glycero-beta-D-manno-heptose + L-seryl-[protein] = O-(L-glycero-alpha-D-manno-heptosyl)-L-seryl-[protein] + ADP + H(+). Glycosylates autotransporter AIDA-I. Catalyzes the addition of both L, D-heptose and D, D-heptose sugars. Probably by glycosylating AIDA-I, involved in bacteria adhesion to host mammalian cells. The protein is Autotransporter heptosyltransferase Aah of Escherichia coli.